The chain runs to 1773 residues: Mucin-22 (1773 aa).

The first 26 residues, 1–26, serve as a signal peptide directing secretion; sequence MRRGNISPAFWFLWLLLFGLLGPSSE. The Extracellular portion of the chain corresponds to 27–1660; that stretch reads NTTAFTKGSD…VIKPSGYLQP (1634 aa). Disordered stretches follow at residues 61–102, 176–357, 372–405, 434–572, 590–674, 754–1026, 1064–1485, and 1603–1639; these read TGSK…TDSG, TMAS…SETT, MGSE…VGSE, SETI…STAS, TVGS…EGSE, DTTT…ETTM, TTIA…GSET, and MGAS…SMGT. Residues 153–1514 are 124 X 10 AA approximate repeats; it reads MASSTTSTAG…PTATSLTGSE (1362 aa). The segment covering 178 to 243 has biased composition (low complexity); sequence ASTTGSETAT…GSEATTTSTA (66 aa). The segment covering 248 to 258 has biased composition (polar residues); that stretch reads ITASSMSSETT. The segment covering 262–357 has biased composition (low complexity); sequence AAGSNTTTAS…TVSTAGSETT (96 aa). Low complexity-rich tracts occupy residues 440–481 and 490–546; these read STAG…AAST and STAG…SEPT. The segment covering 547–572 has biased composition (polar residues); the sequence is MASTMGSETTMASTIGPETTKVSTAS. Composition is skewed to low complexity over residues 755–1025 and 1064–1465; these read TTTA…SETT and TTIA…GSET. 2 stretches are compositionally biased toward polar residues: residues 1466–1485 and 1615–1639; these read NTAC…GSET and RTTT…SMGT. The helical transmembrane segment at 1661 to 1681 threads the bilayer; the sequence is WAIILISLAAVVAAVGLSVGL. Topologically, residues 1682-1773 are cytoplasmic; the sequence is SFCLRNLFFP…GGHYGHGGGH (92 aa).

Expressed in lung by serous cells of the submucosal gland (at protein level). Detected in the placenta, lung and testis.

It localises to the membrane. This chain is Mucin-22 (MUC22), found in Homo sapiens (Human).